Here is a 106-residue protein sequence, read N- to C-terminus: Protein yippee-like At4g27745 (106 aa).

The Yippee domain maps to 8–105 (RLYSCCNCRN…FEKAKIVKED (98 aa)). Zn(2+) is bound by residues Cys-12, Cys-15, Cys-68, and Cys-71.

This sequence belongs to the yippee family.

The protein is Protein yippee-like At4g27745 of Arabidopsis thaliana (Mouse-ear cress).